Consider the following 268-residue polypeptide: Putative hydro-lyase A1S_1268 (268 aa).

Belongs to the D-glutamate cyclase family.

The sequence is that of Putative hydro-lyase A1S_1268 from Acinetobacter baumannii (strain ATCC 17978 / DSM 105126 / CIP 53.77 / LMG 1025 / NCDC KC755 / 5377).